We begin with the raw amino-acid sequence, 224 residues long: 7-cyano-7-deazaguanine synthase (224 aa).

ATP is bound at residue 10–20; sequence FSGGQDSTTCL. Residues Cys193, Cys201, Cys204, and Cys207 each coordinate Zn(2+).

It belongs to the QueC family. Zn(2+) serves as cofactor.

It catalyses the reaction 7-carboxy-7-deazaguanine + NH4(+) + ATP = 7-cyano-7-deazaguanine + ADP + phosphate + H2O + H(+). It functions in the pathway purine metabolism; 7-cyano-7-deazaguanine biosynthesis. In terms of biological role, catalyzes the ATP-dependent conversion of 7-carboxy-7-deazaguanine (CDG) to 7-cyano-7-deazaguanine (preQ(0)). In Neisseria gonorrhoeae (strain ATCC 700825 / FA 1090), this protein is 7-cyano-7-deazaguanine synthase.